We begin with the raw amino-acid sequence, 640 residues long: Scarecrow-like protein 27 (640 aa).

Composition is skewed to low complexity over residues 68–79 (SYSSTTTTLSSS) and 86–98 (TVTNTTVTAGDDN). The tract at residues 68-98 (SYSSTTTTLSSSHGGGGTTVTNTTVTAGDDN) is disordered. The GRAS domain maps to 259–639 (GMAGDDQSVI…KELVTVSAWK (381 aa)). The interval 266–331 (SVIIEQLFNA…AEALLSLIHN (66 aa)) is leucine repeat I (LRI). Residues 350-422 (YRSFSETSPF…NRASSLKLTV (73 aa)) are VHIID. A VHIID motif is present at residues 383 to 387 (IHIID). The tract at residues 438–470 (FTEENLKTFAGEVKIPFEIELLSVELLLNPAYW) is leucine repeat II (LRII). The PFYRE stretch occupies residues 480–565 (EAIAVNLPVN…RFWVQPSIEK (86 aa)). Positions 568 to 639 (MKRHRWIERS…KELVTVSAWK (72 aa)) are SAW.

It belongs to the GRAS family. As to expression, expressed in seedlings, roots, cotyledons, leaves and flowers.

The protein resides in the nucleus. Probable transcription factor involved in plant development. The polypeptide is Scarecrow-like protein 27 (SCL27) (Arabidopsis thaliana (Mouse-ear cress)).